The sequence spans 61 residues: Early E3 6.4 kDa protein (61 aa).

The segment at 1 to 25 (MGNAGPLKLHTITKPGTIPYPPHGS) is disordered.

This Homo sapiens (Human) protein is Early E3 6.4 kDa protein.